Here is a 185-residue protein sequence, read N- to C-terminus: Elongation factor P (185 aa).

This sequence belongs to the elongation factor P family.

Its subcellular location is the cytoplasm. Its pathway is protein biosynthesis; polypeptide chain elongation. Functionally, involved in peptide bond synthesis. Stimulates efficient translation and peptide-bond synthesis on native or reconstituted 70S ribosomes in vitro. Probably functions indirectly by altering the affinity of the ribosome for aminoacyl-tRNA, thus increasing their reactivity as acceptors for peptidyl transferase. The protein is Elongation factor P of Halalkalibacterium halodurans (strain ATCC BAA-125 / DSM 18197 / FERM 7344 / JCM 9153 / C-125) (Bacillus halodurans).